We begin with the raw amino-acid sequence, 131 residues long: Small ribosomal subunit protein uS8 (131 aa).

The protein belongs to the universal ribosomal protein uS8 family. As to quaternary structure, part of the 30S ribosomal subunit. Contacts proteins S5 and S12.

Functionally, one of the primary rRNA binding proteins, it binds directly to 16S rRNA central domain where it helps coordinate assembly of the platform of the 30S subunit. The protein is Small ribosomal subunit protein uS8 of Ruthia magnifica subsp. Calyptogena magnifica.